The following is a 91-amino-acid chain: MKTLLVRISGKVQGVWYRGWTVETAKGLGLAGWVRNRADGTVEALFHGPEAAVEAMLIACRGGPPSARVDDLRVTPVAAPDQPGFSQKPSL.

The Acylphosphatase-like domain maps to 3–89; it reads TLLVRISGKV…PDQPGFSQKP (87 aa). Residues Arg-18 and Asn-36 contribute to the active site.

The protein belongs to the acylphosphatase family.

The enzyme catalyses an acyl phosphate + H2O = a carboxylate + phosphate + H(+). In Rhodospirillum rubrum (strain ATCC 11170 / ATH 1.1.1 / DSM 467 / LMG 4362 / NCIMB 8255 / S1), this protein is Acylphosphatase (acyP).